The chain runs to 405 residues: Pre-mRNA-splicing factor cwc-24 (405 aa).

Disordered stretches follow at residues 1-114 and 162-184; these read MADT…NTIY and TKKKVGGEDDAVQNSEREPDGTY. Residues 15 to 29 show a composition bias toward low complexity; it reads EPTTATPTAPIAPVA. The segment covering 31–46 has biased composition (basic residues); it reads FKKRGAKGKANLRKRP. Residues 56 to 70 are compositionally biased toward acidic residues; that stretch reads SDDDSSDFESSEDEA. Positions 74-83 are enriched in basic residues; that stretch reads RIKRRKKNHH. Residues 221–249 form a C3H1-type zinc finger; sequence DMAPDVCKDYKQTGFCGFGDNCKFLHARE. The segment at 310-349 adopts an RING-type zinc-finger fold; sequence CIICRGPYSNSPVVTRCGHYFCEACALKRYRKDPSCAACG. A compositionally biased stretch (basic and acidic residues) spans 370–386; that stretch reads KARAERLRREARERGEE. The disordered stretch occupies residues 370 to 405; the sequence is KARAERLRREARERGEEVSEEEDEGEDEGEGAEGSD. The span at 387-405 shows a compositional bias: acidic residues; the sequence is VSEEEDEGEDEGEGAEGSD.

This sequence belongs to the CWC24 family. As to quaternary structure, associated with the spliceosome.

It is found in the nucleus. Functionally, involved in pre-mRNA splicing. The chain is Pre-mRNA-splicing factor cwc-24 (cwc-24) from Neurospora crassa (strain ATCC 24698 / 74-OR23-1A / CBS 708.71 / DSM 1257 / FGSC 987).